Consider the following 357-residue polypeptide: 3-dehydroquinate synthase (357 aa).

NAD(+)-binding positions include 104–108 (GVVGD), 128–129 (TT), Lys-141, and 168–171 (FLET). The Zn(2+) site is built by Glu-183, His-243, and His-260.

The protein belongs to the sugar phosphate cyclases superfamily. Dehydroquinate synthase family. NAD(+) serves as cofactor. The cofactor is Co(2+). Requires Zn(2+) as cofactor.

The protein resides in the cytoplasm. The catalysed reaction is 7-phospho-2-dehydro-3-deoxy-D-arabino-heptonate = 3-dehydroquinate + phosphate. Its pathway is metabolic intermediate biosynthesis; chorismate biosynthesis; chorismate from D-erythrose 4-phosphate and phosphoenolpyruvate: step 2/7. In terms of biological role, catalyzes the conversion of 3-deoxy-D-arabino-heptulosonate 7-phosphate (DAHP) to dehydroquinate (DHQ). This chain is 3-dehydroquinate synthase, found in Streptococcus pyogenes serotype M18 (strain MGAS8232).